A 274-amino-acid polypeptide reads, in one-letter code: Insulin-like growth factor-binding protein-like 1 (274 aa).

A signal peptide spans 1-21 (MPRSPGLFLLLLVLQPLPALG). The 76-residue stretch at 30–105 (RNPECGPCRP…PEGTGLCVCA (76 aa)) folds into the IGFBP N-terminal domain. 7 cysteine pairs are disulfide-bonded: cysteine 34–cysteine 59, cysteine 37–cysteine 61, cysteine 42–cysteine 62, cysteine 48–cysteine 65, cysteine 73–cysteine 87, cysteine 81–cysteine 102, and cysteine 111–cysteine 147. The Kazal-like domain maps to 91–149 (AAGAAPEGTGLCVCAQRGSVCGSDGRSYPSVCALRLRARQAPRALPGHLHKARDGPCEF). Residues 151 to 255 (PVVITPPQSV…GEAQSHGTVT (105 aa)) enclose the Ig-like C2-type domain. A glycan (N-linked (GlcNAc...) asparagine) is linked at asparagine 162. Cysteine 172 and cysteine 239 are oxidised to a cystine.

The protein resides in the secreted. In terms of biological role, IGF-binding proteins prolong the half-life of IGFs and have been shown to either inhibit or stimulate the growth promoting effects of the IGFs in cell culture. They alter the interaction of IGFs with their cell surface receptors. This Bos taurus (Bovine) protein is Insulin-like growth factor-binding protein-like 1 (IGFBPL1).